A 140-amino-acid polypeptide reads, in one-letter code: Large ribosomal subunit protein uL11 (140 aa).

It belongs to the universal ribosomal protein uL11 family. Part of the ribosomal stalk of the 50S ribosomal subunit. Interacts with L10 and the large rRNA to form the base of the stalk. L10 forms an elongated spine to which L12 dimers bind in a sequential fashion forming a multimeric L10(L12)X complex. One or more lysine residues are methylated.

Its function is as follows. Forms part of the ribosomal stalk which helps the ribosome interact with GTP-bound translation factors. In Pelobacter propionicus (strain DSM 2379 / NBRC 103807 / OttBd1), this protein is Large ribosomal subunit protein uL11.